The following is a 379-amino-acid chain: L-lactate dehydrogenase (379 aa).

Residues methionine 1–arginine 379 enclose the FMN hydroxy acid dehydrogenase domain. Tyrosine 24 provides a ligand contact to substrate. The FMN site is built by serine 106 and glutamine 127. Tyrosine 129 contributes to the substrate binding site. Threonine 155 serves as a coordination point for FMN. Arginine 164 contacts substrate. Residue lysine 251 coordinates FMN. Histidine 275 acts as the Proton acceptor in catalysis. Arginine 278 is a substrate binding site. Residue aspartate 306–arginine 330 participates in FMN binding.

Belongs to the FMN-dependent alpha-hydroxy acid dehydrogenase family. As to quaternary structure, homotetramer. Requires FMN as cofactor.

The protein localises to the cell inner membrane. It catalyses the reaction (S)-lactate + A = pyruvate + AH2. Functionally, catalyzes the conversion of L-lactate to pyruvate. Is coupled to the respiratory chain. In Ectopseudomonas mendocina (strain ymp) (Pseudomonas mendocina), this protein is L-lactate dehydrogenase.